Reading from the N-terminus, the 37-residue chain is Photosystem II reaction center protein Psb30 (37 aa).

Residues 10-30 traverse the membrane as a helical segment; it reads LISLLLLTLIMLAGPAVIALW.

This sequence belongs to the Psb30/Ycf12 family. PSII is composed of 1 copy each of membrane proteins PsbA, PsbB, PsbC, PsbD, PsbE, PsbF, PsbH, PsbI, PsbJ, PsbK, PsbL, PsbM, PsbT, PsbX, Psb30/Ycf12, peripheral proteins PsbO, CyanoQ (PsbQ), PsbU, PsbV and a large number of cofactors. It forms dimeric complexes.

It is found in the cell inner membrane. Its function is as follows. A core subunit of photosystem II (PSII), probably helps stabilize the reaction center. The sequence is that of Photosystem II reaction center protein Psb30 from Gloeobacter violaceus (strain ATCC 29082 / PCC 7421).